The chain runs to 555 residues: Small ribosomal subunit protein uS3m (555 aa).

The segment at 1-20 is disordered; that stretch reads MARKGNPISVRLGKNRSSDS.

It belongs to the universal ribosomal protein uS3 family.

The protein resides in the mitochondrion. This chain is Small ribosomal subunit protein uS3m (RPS3), found in Brassica napus (Rape).